A 289-amino-acid polypeptide reads, in one-letter code: ATP synthase subunit a (289 aa).

6 helical membrane passes run 43 to 63 (AFHLDTLGWSVALGLIFVLIF), 104 to 124 (IAPLALTIFVWVFLMNAVDLI), 160 to 180 (LSVFALIIFYSIKVKGIGGFI), 193 to 213 (IFVQALLIPVNFLLEFVTLIA), 232 to 252 (VFILIAVMFGSGLLWLSGLGV), and 259 to 279 (AVFHILIITLQAFIFMMLTIV).

This sequence belongs to the ATPase A chain family. As to quaternary structure, F-type ATPases have 2 components, CF(1) - the catalytic core - and CF(0) - the membrane proton channel. CF(1) has five subunits: alpha(3), beta(3), gamma(1), delta(1), epsilon(1). CF(0) has three main subunits: a(1), b(2) and c(9-12). The alpha and beta chains form an alternating ring which encloses part of the gamma chain. CF(1) is attached to CF(0) by a central stalk formed by the gamma and epsilon chains, while a peripheral stalk is formed by the delta and b chains.

The protein localises to the cell inner membrane. In terms of biological role, key component of the proton channel; it plays a direct role in the translocation of protons across the membrane. This chain is ATP synthase subunit a, found in Pseudomonas fluorescens (strain SBW25).